Reading from the N-terminus, the 331-residue chain is Tetraacyldisaccharide 4'-kinase (331 aa).

55-62 contributes to the ATP binding site; the sequence is TAGGNGKT.

Belongs to the LpxK family.

The enzyme catalyses a lipid A disaccharide + ATP = a lipid IVA + ADP + H(+). It participates in glycolipid biosynthesis; lipid IV(A) biosynthesis; lipid IV(A) from (3R)-3-hydroxytetradecanoyl-[acyl-carrier-protein] and UDP-N-acetyl-alpha-D-glucosamine: step 6/6. Its function is as follows. Transfers the gamma-phosphate of ATP to the 4'-position of a tetraacyldisaccharide 1-phosphate intermediate (termed DS-1-P) to form tetraacyldisaccharide 1,4'-bis-phosphate (lipid IVA). The chain is Tetraacyldisaccharide 4'-kinase from Edwardsiella ictaluri (strain 93-146).